Reading from the N-terminus, the 187-residue chain is Ribosome-recycling factor (187 aa).

Belongs to the RRF family.

The protein localises to the cytoplasm. Its function is as follows. Responsible for the release of ribosomes from messenger RNA at the termination of protein biosynthesis. May increase the efficiency of translation by recycling ribosomes from one round of translation to another. This Flavobacterium psychrophilum (strain ATCC 49511 / DSM 21280 / CIP 103535 / JIP02/86) protein is Ribosome-recycling factor.